The sequence spans 231 residues: Ribosyldihydronicotinamide dehydrogenase [quinone] (231 aa).

FAD contacts are provided by residues histidine 12 and phenylalanine 18–serine 21. Serine 80 bears the Phosphoserine mark. Leucine 104–phenylalanine 107 is an FAD binding site. Phenylalanine 127–isoleucine 129 is a binding site for substrate. FAD-binding positions include threonine 148–glycine 151 and tyrosine 156. Residues histidine 174 and histidine 178 each contribute to the Zn(2+) site. Residue glutamate 194 coordinates FAD. Residue serine 197 is modified to Phosphoserine. Arginine 201 contacts FAD. Cysteine 223 serves as a coordination point for Zn(2+).

It belongs to the NAD(P)H dehydrogenase (quinone) family. Homodimer. Zn(2+) is required as a cofactor. Requires FAD as cofactor.

The protein resides in the cytoplasm. It catalyses the reaction 1-(beta-D-ribofuranosyl)-1,4-dihydronicotinamide + a quinone + H(+) = beta-nicotinamide D-riboside + a quinol. Functionally, the enzyme apparently serves as a quinone reductase in connection with conjugation reactions of hydroquinones involved in detoxification pathways as well as in biosynthetic processes such as the vitamin K-dependent gamma-carboxylation of glutamate residues in prothrombin synthesis. This Pongo abelii (Sumatran orangutan) protein is Ribosyldihydronicotinamide dehydrogenase [quinone] (NQO2).